The sequence spans 191 residues: CASP-like protein 2U3 (191 aa).

The Cytoplasmic segment spans residues 1–25 (MGAYDGAEAPRAAPASTAANSRPSR). A helical transmembrane segment spans residues 26–46 (LLLLHSLLLRLVAVVVSILVI). At 47-68 (AVMVHAKQRVMIFKAEWDNSKA) the chain is on the extracellular side. The helical transmembrane segment at 69-89 (FVALVAISAICLGYSFLQFIL) threads the bilayer. The Cytoplasmic segment spans residues 90 to 114 (SAFHLCSKSWKSPTKCWAWMNFIAD). A helical membrane pass occupies residues 115–135 (QILTYAMLGAAAAAAELAYIA). Residues 136 to 157 (KNGSSRAQWQPICSTFNTFCTR) lie on the Extracellular side of the membrane. The N-linked (GlcNAc...) asparagine glycan is linked to Asn-137. The helical transmembrane segment at 158–178 (AGASIILSFIAVLALANSSAI) threads the bilayer. The Cytoplasmic segment spans residues 179–191 (SAYHLFRRPSSSV).

This sequence belongs to the Casparian strip membrane proteins (CASP) family. Homodimer and heterodimers.

Its subcellular location is the cell membrane. This Selaginella moellendorffii (Spikemoss) protein is CASP-like protein 2U3.